Consider the following 617-residue polypeptide: Electron transfer flavoprotein-ubiquinone oxidoreductase, mitochondrial (617 aa).

The N-terminal 33 residues, 1–33 (MQVLLARLACPVYQCFHAIKIKKNYLPLCATRW), are a transit peptide targeting the mitochondrion. Position 71–85 (71–85 (VVIVGAGPAGLSAAA)) interacts with FAD. N6-acetyllysine is present on lysine 96. An intramembrane segment occupies 109 to 130 (IGAHTLSGACLDPRALQELFPD). Lysine 132 and lysine 223 each carry N6-acetyllysine. 2 residues coordinate a ubiquinone: glycine 305 and glycine 306. N6-acetyllysine is present on lysine 357. Residues 428–447 (IGLDVTEYEDNLKKSWVWKE) lie within the membrane without spanning it. Serine 551 is modified (phosphoserine). [4Fe-4S] cluster-binding residues include cysteine 561, cysteine 586, cysteine 589, and cysteine 592. The region spanning 577–606 (FRLQINAQNCVHCKTCDIKDPSQNINWVVP) is the 4Fe-4S ferredoxin-type domain.

Belongs to the ETF-QO/FixC family. Monomer. The cofactor is [4Fe-4S] cluster. FAD serves as cofactor.

It is found in the mitochondrion inner membrane. The catalysed reaction is a ubiquinone + reduced [electron-transfer flavoprotein] = a ubiquinol + oxidized [electron-transfer flavoprotein] + H(+). In terms of biological role, accepts electrons from ETF and reduces ubiquinone. The protein is Electron transfer flavoprotein-ubiquinone oxidoreductase, mitochondrial (ETFDH) of Bos taurus (Bovine).